A 271-amino-acid polypeptide reads, in one-letter code: Virulence regulon transcriptional activator VirF (271 aa).

The HTH araC/xylS-type domain maps to E167 to T265. DNA-binding regions (H-T-H motif) lie at residues S184 to Y205 and I232 to F255.

Functionally, transcriptional activator of the Yersinia virulence regulon. This is Virulence regulon transcriptional activator VirF (virF) from Yersinia enterocolitica serotype O:8 / biotype 1B (strain NCTC 13174 / 8081).